Here is an 804-residue protein sequence, read N- to C-terminus: Leucine--tRNA ligase (804 aa).

The 'HIGH' region signature appears at 40–51; it reads PYPSGAGLHVGH. Positions 576–580 match the 'KMSKS' region motif; it reads KMSKS. Lys579 serves as a coordination point for ATP.

It belongs to the class-I aminoacyl-tRNA synthetase family.

It localises to the cytoplasm. The enzyme catalyses tRNA(Leu) + L-leucine + ATP = L-leucyl-tRNA(Leu) + AMP + diphosphate. This Staphylococcus saprophyticus subsp. saprophyticus (strain ATCC 15305 / DSM 20229 / NCIMB 8711 / NCTC 7292 / S-41) protein is Leucine--tRNA ligase.